Consider the following 140-residue polypeptide: Nucleoside diphosphate kinase (140 aa).

Positions 11, 59, 87, 93, 104, and 114 each coordinate ATP. Catalysis depends on H117, which acts as the Pros-phosphohistidine intermediate.

It belongs to the NDK family. Homotetramer. Requires Mg(2+) as cofactor.

The protein resides in the cytoplasm. The enzyme catalyses a 2'-deoxyribonucleoside 5'-diphosphate + ATP = a 2'-deoxyribonucleoside 5'-triphosphate + ADP. It carries out the reaction a ribonucleoside 5'-diphosphate + ATP = a ribonucleoside 5'-triphosphate + ADP. Its function is as follows. Major role in the synthesis of nucleoside triphosphates other than ATP. The ATP gamma phosphate is transferred to the NDP beta phosphate via a ping-pong mechanism, using a phosphorylated active-site intermediate. The protein is Nucleoside diphosphate kinase of Gluconacetobacter diazotrophicus (strain ATCC 49037 / DSM 5601 / CCUG 37298 / CIP 103539 / LMG 7603 / PAl5).